The chain runs to 898 residues: Endoplasmic reticulum metallopeptidase 1 (898 aa).

Met1 is modified (N-acetylmethionine). A disordered region spans residues 1–59 (MEWSSESAAVRRHRGTAERREGQAAASHPQREASAQEDARGGGRMRGRTESGGESRGAK). The Cytoplasmic segment spans residues 1–66 (MEWSSESAAV…GAKTALSEAR (66 aa)). A compositionally biased stretch (basic and acidic residues) spans 37–57 (EDARGGGRMRGRTESGGESRG). The chain crosses the membrane as a helical span at residues 67-87 (TALALALYLLALRALVQLSLQ). At 88–393 (RLVLSRTSGL…SSSEYRHGSM (306 aa)) the chain is on the lumenal side. An N-linked (GlcNAc...) asparagine glycan is attached at Asn176. An intrachain disulfide couples Cys198 to Cys216. Zn(2+) is bound by residues His199 and Asp211. The Proton acceptor role is filled by Glu245. Residues Glu246, Glu272, and His348 each contribute to the Zn(2+) site. The chain crosses the membrane as a helical span at residues 394-414 (VFFDVLGLLVIAYPSRVGSII). Residues 415–451 (NYMVVMAVVLYLGRKLLRPNHSNSNYVRDFLCGLGIT) lie on the Cytoplasmic side of the membrane. The chain crosses the membrane as a helical span at residues 452–472 (FISWFTSLVTVLIIAVFVSLI). Residues 473 to 480 (GQSLSWYN) lie on the Lumenal side of the membrane. A helical membrane pass occupies residues 481 to 501 (YFYIAVCLYGTATVAKIILIH). The Cytoplasmic segment spans residues 502 to 515 (TLAKRFYYVNASDL). A helical transmembrane segment spans residues 516–538 (YLGELFFDTSLFVHCGFLVALTA). Residues 539-542 (QGFC) lie on the Lumenal side of the membrane. The chain crosses the membrane as a helical span at residues 543–562 (SAFMSAVWVAFPLLTKLCVY). Residues 563–573 (KDFKKHGAKGR) lie on the Cytoplasmic side of the membrane. A helical transmembrane segment spans residues 574–594 (FIALYLLGMFIPYLYGLYLIW). Over 595–615 (AVFEMFTPILGRSGSEIPPDV) the chain is Lumenal. A helical membrane pass occupies residues 616–636 (VLASILAVCVMILSSYFITFI). At 637 to 645 (YLVNSTKKT) the chain is on the cytoplasmic side. A helical membrane pass occupies residues 646–666 (ILTLILVCAVTFLLVCSGAFF). Over 667-898 (PYSSNPDSPK…WVSTYSLFVF (232 aa)) the chain is Lumenal. N-linked (GlcNAc...) asparagine glycosylation is present at Asn724.

Belongs to the peptidase M28 family. It depends on Zn(2+) as a cofactor. In terms of tissue distribution, widely expressed, with highest levels in ovary, kidney, hypothalamus and hippocampus. Within the ovarian follicle, expressed in granulosa cells, but not in oocytes. Present in both preantral and antral follicles, but not in atretic antral follicle.

The protein localises to the endoplasmic reticulum membrane. Within the ovary, required for the organization of somatic cells and oocytes into discrete follicular structures. The chain is Endoplasmic reticulum metallopeptidase 1 from Rattus norvegicus (Rat).